Reading from the N-terminus, the 671-residue chain is UvrABC system protein C (671 aa).

Positions 1 to 20 (MPHLPDSMSPEAPAGPAPAT) are disordered. Over residues 10–20 (PEAPAGPAPAT) the composition is skewed to low complexity. In terms of domain architecture, GIY-YIG spans 37-115 (PLPGVYRYFD…IKTLNPKYNI (79 aa)). Positions 232 to 267 (RQVMEALEARMMAHAEKLEFEQAAELRNQVAALSNV) constitute a UVR domain.

It belongs to the UvrC family. As to quaternary structure, interacts with UvrB in an incision complex.

The protein localises to the cytoplasm. The UvrABC repair system catalyzes the recognition and processing of DNA lesions. UvrC both incises the 5' and 3' sides of the lesion. The N-terminal half is responsible for the 3' incision and the C-terminal half is responsible for the 5' incision. The chain is UvrABC system protein C from Albidiferax ferrireducens (strain ATCC BAA-621 / DSM 15236 / T118) (Rhodoferax ferrireducens).